Consider the following 758-residue polypeptide: 5-methyltetrahydropteroyltriglutamate--homocysteine methyltransferase (758 aa).

Residues 17–20 (RELK) and Lys-117 each bind 5-methyltetrahydropteroyltri-L-glutamate. Residues 434–436 (IGS) and Glu-487 each bind L-homocysteine. L-methionine-binding positions include 434–436 (IGS) and Glu-487. Residues 518–519 (RC) and Trp-564 each bind 5-methyltetrahydropteroyltri-L-glutamate. Asp-602 is an L-homocysteine binding site. Asp-602 contributes to the L-methionine binding site. Glu-608 contributes to the 5-methyltetrahydropteroyltri-L-glutamate binding site. The Zn(2+) site is built by His-644, Cys-646, and Glu-668. His-697 functions as the Proton donor in the catalytic mechanism. Cys-729 provides a ligand contact to Zn(2+).

It belongs to the vitamin-B12 independent methionine synthase family. Zn(2+) serves as cofactor.

The enzyme catalyses 5-methyltetrahydropteroyltri-L-glutamate + L-homocysteine = tetrahydropteroyltri-L-glutamate + L-methionine. It functions in the pathway amino-acid biosynthesis; L-methionine biosynthesis via de novo pathway; L-methionine from L-homocysteine (MetE route): step 1/1. Catalyzes the transfer of a methyl group from 5-methyltetrahydrofolate to homocysteine resulting in methionine formation. This Sodalis glossinidius (strain morsitans) protein is 5-methyltetrahydropteroyltriglutamate--homocysteine methyltransferase.